The following is an 859-amino-acid chain: Leucine--tRNA ligase (859 aa).

The 'HIGH' region motif lies at 42 to 52 (PYPSGRLHMGH). The 'KMSKS' region signature appears at 618–622 (KMSKS). Residue Lys-621 coordinates ATP.

The protein belongs to the class-I aminoacyl-tRNA synthetase family.

Its subcellular location is the cytoplasm. The enzyme catalyses tRNA(Leu) + L-leucine + ATP = L-leucyl-tRNA(Leu) + AMP + diphosphate. This chain is Leucine--tRNA ligase, found in Shewanella sp. (strain W3-18-1).